A 256-amino-acid chain; its full sequence is Thiazole synthase (256 aa).

Residue Lys-95 is the Schiff-base intermediate with DXP of the active site. Residues Gly-156, 183 to 184 (AG), and 205 to 206 (NT) contribute to the 1-deoxy-D-xylulose 5-phosphate site.

Belongs to the ThiG family. Homotetramer. Forms heterodimers with either ThiH or ThiS.

Its subcellular location is the cytoplasm. It catalyses the reaction [ThiS sulfur-carrier protein]-C-terminal-Gly-aminoethanethioate + 2-iminoacetate + 1-deoxy-D-xylulose 5-phosphate = [ThiS sulfur-carrier protein]-C-terminal Gly-Gly + 2-[(2R,5Z)-2-carboxy-4-methylthiazol-5(2H)-ylidene]ethyl phosphate + 2 H2O + H(+). The protein operates within cofactor biosynthesis; thiamine diphosphate biosynthesis. Its function is as follows. Catalyzes the rearrangement of 1-deoxy-D-xylulose 5-phosphate (DXP) to produce the thiazole phosphate moiety of thiamine. Sulfur is provided by the thiocarboxylate moiety of the carrier protein ThiS. In vitro, sulfur can be provided by H(2)S. The chain is Thiazole synthase from Gluconacetobacter diazotrophicus (strain ATCC 49037 / DSM 5601 / CCUG 37298 / CIP 103539 / LMG 7603 / PAl5).